Here is a 489-residue protein sequence, read N- to C-terminus: uncharacterized protein (489 aa).

4 disordered regions span residues Met1–Asp94, Asn109–Asp229, Asp300–Gln389, and Ser428–Lys461. 2 stretches are compositionally biased toward low complexity: residues Leu43–Lys53 and Ser64–Asp77. Residues Asn121–Asp138 show a composition bias toward acidic residues. Basic residues predominate over residues Lys144–Leu154. Basic and acidic residues predominate over residues Met155–Asn164. Over residues Ser173 to Pro199 the composition is skewed to basic residues. Residues Asn308–Glu343 are compositionally biased toward acidic residues. Low complexity-rich tracts occupy residues Asp344–Gln389 and Ser433–Ser449.

This is an uncharacterized protein from Dictyostelium discoideum (Social amoeba).